Consider the following 592-residue polypeptide: Probable 6-phosphofructo-2-kinase C222.13c (592 aa).

Positions 1–80 (MSNTGSARTE…PANDVEKMEV (80 aa)) are disordered. Basic and acidic residues predominate over residues 57-66 (SIFKREELTP). An ATP-binding site is contributed by 150–157 (GIPATGKS). Active-site residues include D235 and C266. A beta-D-fructose 6-phosphate-binding site is contributed by R300. H527 functions as the Proton donor in the catalytic mechanism.

It localises to the cytoplasm. The protein resides in the nucleus. It carries out the reaction beta-D-fructose 6-phosphate + ATP = beta-D-fructose 2,6-bisphosphate + ADP + H(+). Synthesis of fructose 2,6-bisphosphate. In Schizosaccharomyces pombe (strain 972 / ATCC 24843) (Fission yeast), this protein is Probable 6-phosphofructo-2-kinase C222.13c.